The following is a 134-amino-acid chain: Small ribosomal subunit protein uS8c (134 aa).

This sequence belongs to the universal ribosomal protein uS8 family. In terms of assembly, part of the 30S ribosomal subunit.

It localises to the plastid. The protein resides in the chloroplast. Functionally, one of the primary rRNA binding proteins, it binds directly to 16S rRNA central domain where it helps coordinate assembly of the platform of the 30S subunit. This chain is Small ribosomal subunit protein uS8c (rps8), found in Aethionema cordifolium (Lebanon stonecress).